The following is a 347-amino-acid chain: GMP reductase (347 aa).

108–131 contacts NADP(+); the sequence is ADFEKTVQILALNPALNFVCIDVA. Glycine 181 and glycine 183 together coordinate K(+). Cysteine 186 acts as the Thioimidate intermediate in catalysis. 216 to 239 is an NADP(+) binding site; sequence IVSDGGCTMPGDVAKAFGGGADFV.

The protein belongs to the IMPDH/GMPR family. GuaC type 1 subfamily. As to quaternary structure, homotetramer.

The catalysed reaction is IMP + NH4(+) + NADP(+) = GMP + NADPH + 2 H(+). Catalyzes the irreversible NADPH-dependent deamination of GMP to IMP. It functions in the conversion of nucleobase, nucleoside and nucleotide derivatives of G to A nucleotides, and in maintaining the intracellular balance of A and G nucleotides. In Salmonella paratyphi A (strain ATCC 9150 / SARB42), this protein is GMP reductase.